The primary structure comprises 99 residues: (4S)-4-hydroxy-5-phosphonooxypentane-2,3-dione isomerase (99 aa).

An ABM domain is found at 2 to 91; that stretch reads HVTLVEINVK…ISEPRKKRSF (90 aa).

Belongs to the LsrG family. As to quaternary structure, homodimer.

The protein localises to the cytoplasm. The catalysed reaction is (2S)-2-hydroxy-3,4-dioxopentyl phosphate = 3-hydroxy-2,4-dioxopentyl phosphate. Involved in the degradation of phospho-AI-2, thereby terminating induction of the lsr operon and closing the AI-2 signaling cycle. Catalyzes the conversion of (4S)-4-hydroxy-5-phosphonooxypentane-2,3-dione (P-DPD) to 3-hydroxy-5-phosphonooxypentane-2,4-dione (P-HPD). The chain is (4S)-4-hydroxy-5-phosphonooxypentane-2,3-dione isomerase from Photorhabdus laumondii subsp. laumondii (strain DSM 15139 / CIP 105565 / TT01) (Photorhabdus luminescens subsp. laumondii).